Reading from the N-terminus, the 208-residue chain is Uracil phosphoribosyltransferase (208 aa).

Residues R78, R103, and 130–138 (DPMLATGGS) contribute to the 5-phospho-alpha-D-ribose 1-diphosphate site. Uracil is bound by residues I193 and 198–200 (GDA). D199 provides a ligand contact to 5-phospho-alpha-D-ribose 1-diphosphate.

The protein belongs to the UPRTase family. The cofactor is Mg(2+).

It catalyses the reaction UMP + diphosphate = 5-phospho-alpha-D-ribose 1-diphosphate + uracil. Its pathway is pyrimidine metabolism; UMP biosynthesis via salvage pathway; UMP from uracil: step 1/1. With respect to regulation, allosterically activated by GTP. In terms of biological role, catalyzes the conversion of uracil and 5-phospho-alpha-D-ribose 1-diphosphate (PRPP) to UMP and diphosphate. The polypeptide is Uracil phosphoribosyltransferase (Photobacterium profundum (strain SS9)).